Reading from the N-terminus, the 283-residue chain is 2-dehydro-3-deoxyphosphooctonate aldolase (283 aa).

The protein belongs to the KdsA family.

It is found in the cytoplasm. It carries out the reaction D-arabinose 5-phosphate + phosphoenolpyruvate + H2O = 3-deoxy-alpha-D-manno-2-octulosonate-8-phosphate + phosphate. It participates in carbohydrate biosynthesis; 3-deoxy-D-manno-octulosonate biosynthesis; 3-deoxy-D-manno-octulosonate from D-ribulose 5-phosphate: step 2/3. It functions in the pathway bacterial outer membrane biogenesis; lipopolysaccharide biosynthesis. This is 2-dehydro-3-deoxyphosphooctonate aldolase from Vibrio parahaemolyticus serotype O3:K6 (strain RIMD 2210633).